The following is a 310-amino-acid chain: Ribonuclease HIII (310 aa).

An RNase H type-2 domain is found at 90–306 (FQCIGSDEAG…RKKAENLVQK (217 aa)). D96, E97, and D201 together coordinate a divalent metal cation.

Belongs to the RNase HII family. RnhC subfamily. Requires Mn(2+) as cofactor. Mg(2+) is required as a cofactor.

It is found in the cytoplasm. It catalyses the reaction Endonucleolytic cleavage to 5'-phosphomonoester.. In terms of biological role, endonuclease that specifically degrades the RNA of RNA-DNA hybrids. This Staphylococcus saprophyticus subsp. saprophyticus (strain ATCC 15305 / DSM 20229 / NCIMB 8711 / NCTC 7292 / S-41) protein is Ribonuclease HIII.